Consider the following 347-residue polypeptide: 4-hydroxy-2-oxovalerate aldolase (347 aa).

One can recognise a Pyruvate carboxyltransferase domain in the interval 2-252 (ILISDATLRD…DTRTTFERVM (251 aa)). 10–11 (RD) provides a ligand contact to substrate. Mn(2+) is bound at residue Asp11. The active-site Proton acceptor is His14. Substrate-binding residues include Ser164 and His191. Mn(2+) contacts are provided by His191 and His193.

Belongs to the 4-hydroxy-2-oxovalerate aldolase family.

It catalyses the reaction (S)-4-hydroxy-2-oxopentanoate = acetaldehyde + pyruvate. The chain is 4-hydroxy-2-oxovalerate aldolase (mhpE) from Burkholderia pseudomallei (strain 1710b).